Reading from the N-terminus, the 69-residue chain is uncharacterized protein (69 aa).

It localises to the mitochondrion. This is an uncharacterized protein from Marchantia polymorpha (Common liverwort).